The primary structure comprises 283 residues: tRNA-cytidine(32) 2-sulfurtransferase (283 aa).

A PP-loop motif motif is present at residues 37–42 (SGGKDS). Positions 112, 115, and 203 each coordinate [4Fe-4S] cluster.

Belongs to the TtcA family. Homodimer. Mg(2+) serves as cofactor. It depends on [4Fe-4S] cluster as a cofactor.

It is found in the cytoplasm. The catalysed reaction is cytidine(32) in tRNA + S-sulfanyl-L-cysteinyl-[cysteine desulfurase] + AH2 + ATP = 2-thiocytidine(32) in tRNA + L-cysteinyl-[cysteine desulfurase] + A + AMP + diphosphate + H(+). It participates in tRNA modification. Its function is as follows. Catalyzes the ATP-dependent 2-thiolation of cytidine in position 32 of tRNA, to form 2-thiocytidine (s(2)C32). The sulfur atoms are provided by the cysteine/cysteine desulfurase (IscS) system. This chain is tRNA-cytidine(32) 2-sulfurtransferase, found in Legionella pneumophila subsp. pneumophila (strain Philadelphia 1 / ATCC 33152 / DSM 7513).